A 151-amino-acid polypeptide reads, in one-letter code: Small ribosomal subunit protein uS15 (151 aa).

It belongs to the universal ribosomal protein uS15 family.

The chain is Small ribosomal subunit protein uS15 (RPS13) from Agaricus bisporus (White button mushroom).